The sequence spans 411 residues: 2,3-bisphosphoglycerate-independent phosphoglycerate mutase (411 aa).

It belongs to the BPG-independent phosphoglycerate mutase family. A-PGAM subfamily.

It carries out the reaction (2R)-2-phosphoglycerate = (2R)-3-phosphoglycerate. The protein operates within carbohydrate degradation; glycolysis; pyruvate from D-glyceraldehyde 3-phosphate: step 3/5. Functionally, catalyzes the interconversion of 2-phosphoglycerate and 3-phosphoglycerate. The chain is 2,3-bisphosphoglycerate-independent phosphoglycerate mutase from Pyrobaculum calidifontis (strain DSM 21063 / JCM 11548 / VA1).